An 86-amino-acid chain; its full sequence is Conotoxin Lt15a (86 aa).

The first 23 residues, 1-23, serve as a signal peptide directing secretion; sequence MEKLTILILVATVLLAIQVLVQS. Residues 24–49 constitute a propeptide that is removed on maturation; that stretch reads DGENPVKGRVKHYAAKRFSALFRGPR.

Belongs to the conotoxin O2 superfamily. Post-translationally, contains 4 disulfide bonds. In terms of tissue distribution, expressed by the venom duct.

Its subcellular location is the secreted. The chain is Conotoxin Lt15a from Conus litteratus (Lettered cone).